A 210-amino-acid polypeptide reads, in one-letter code: Urease accessory protein UreG (210 aa).

GTP is bound at residue 15–22; that stretch reads GPVGSGKT.

It belongs to the SIMIBI class G3E GTPase family. UreG subfamily. As to quaternary structure, homodimer. UreD, UreF and UreG form a complex that acts as a GTP-hydrolysis-dependent molecular chaperone, activating the urease apoprotein by helping to assemble the nickel containing metallocenter of UreC. The UreE protein probably delivers the nickel.

It is found in the cytoplasm. In terms of biological role, facilitates the functional incorporation of the urease nickel metallocenter. This process requires GTP hydrolysis, probably effectuated by UreG. The sequence is that of Urease accessory protein UreG from Ralstonia nicotianae (strain ATCC BAA-1114 / GMI1000) (Ralstonia solanacearum).